A 284-amino-acid polypeptide reads, in one-letter code: NADH-cytochrome b5 reductase 1 (284 aa).

Residues 8–28 form a helical membrane-spanning segment; the sequence is PLVIFSTLAAIILAAVAVYVV. Residues 41-144 form the FAD-binding FR-type domain; it reads DVFQKFPLIE…RGPKGFFTYT (104 aa). Residues 124–139 and 150–182 contribute to the FAD site; these read DSKSVGDHIEVRGPKG and HLGMIAGGTGIAPMYQVLTAILTNPDDKTKISL.

The protein belongs to the flavoprotein pyridine nucleotide cytochrome reductase family. Monomer. Component of the 2-(3-amino-3-carboxypropyl)histidine synthase complex composed of DPH1, DPH2, DPH3 and a NADH-dependent reductase, predominantly CBR1. It depends on FAD as a cofactor.

Its subcellular location is the mitochondrion outer membrane. It carries out the reaction 2 Fe(III)-[cytochrome b5] + NADH = 2 Fe(II)-[cytochrome b5] + NAD(+) + H(+). It catalyses the reaction 2 Fe(3+)-[Dph3] + NADH = 2 Fe(2+)-[Dph3] + NAD(+) + H(+). The protein operates within protein modification; peptidyl-diphthamide biosynthesis. Its function is as follows. NADH-dependent reductase for DPH3 and cytochrome b5. Required for the first step of diphthamide biosynthesis, a post-translational modification of histidine which occurs in elongation factor 2. DPH1 and DPH2 transfer a 3-amino-3-carboxypropyl (ACP) group from S-adenosyl-L-methionine (SAM) to a histidine residue, the reaction is assisted by a reduction system comprising DPH3 and a NADH-dependent reductase, predominantly CBR1. By reducing DPH3, also involved in the formation of the tRNA wobble base modification mcm5s 2U (5-methoxycarbonylmethyl-2-thiouridine), mediated by the elongator complex. The cytochrome b5/NADH cytochrome b5 reductase electron transfer system supports the catalytic activity of several sterol biosynthetic enzymes. The protein is NADH-cytochrome b5 reductase 1 (CBR1) of Meyerozyma guilliermondii (strain ATCC 6260 / CBS 566 / DSM 6381 / JCM 1539 / NBRC 10279 / NRRL Y-324) (Yeast).